Consider the following 286-residue polypeptide: Isopentenyl-diphosphate Delta-isomerase II (286 aa).

Positions 104-256 (MLHRAFSVFL…GLKLSPWFRL (153 aa)) constitute a Nudix hydrolase domain. Catalysis depends on residues Cys141 and Glu203.

This sequence belongs to the IPP isomerase type 1 family.

It catalyses the reaction isopentenyl diphosphate = dimethylallyl diphosphate. The protein operates within isoprenoid biosynthesis; dimethylallyl diphosphate biosynthesis; dimethylallyl diphosphate from isopentenyl diphosphate: step 1/1. It participates in porphyrin-containing compound metabolism; chlorophyll biosynthesis. Its function is as follows. Catalyzes the 1,3-allylic rearrangement of the homoallylic substrate isopentenyl (IPP) to its highly electrophilic allylic isomer, dimethylallyl diphosphate (DMAPP). This Clarkia breweri (Fairy fans) protein is Isopentenyl-diphosphate Delta-isomerase II (IPI2).